A 233-amino-acid chain; its full sequence is Leucyl/phenylalanyl-tRNA--protein transferase (233 aa).

The protein belongs to the L/F-transferase family.

The protein localises to the cytoplasm. It catalyses the reaction N-terminal L-lysyl-[protein] + L-leucyl-tRNA(Leu) = N-terminal L-leucyl-L-lysyl-[protein] + tRNA(Leu) + H(+). It carries out the reaction N-terminal L-arginyl-[protein] + L-leucyl-tRNA(Leu) = N-terminal L-leucyl-L-arginyl-[protein] + tRNA(Leu) + H(+). The enzyme catalyses L-phenylalanyl-tRNA(Phe) + an N-terminal L-alpha-aminoacyl-[protein] = an N-terminal L-phenylalanyl-L-alpha-aminoacyl-[protein] + tRNA(Phe). Its function is as follows. Functions in the N-end rule pathway of protein degradation where it conjugates Leu, Phe and, less efficiently, Met from aminoacyl-tRNAs to the N-termini of proteins containing an N-terminal arginine or lysine. The polypeptide is Leucyl/phenylalanyl-tRNA--protein transferase (Chromobacterium violaceum (strain ATCC 12472 / DSM 30191 / JCM 1249 / CCUG 213 / NBRC 12614 / NCIMB 9131 / NCTC 9757 / MK)).